A 660-amino-acid polypeptide reads, in one-letter code: Protein translocase subunit SecA 2 (660 aa).

Residues glutamine 113, 131–135 (GEGKT), and aspartate 539 contribute to the ATP site.

The protein belongs to the SecA family. Monomer and homodimer. Part of the essential Sec protein translocation apparatus which comprises SecA, SecYEG and auxiliary proteins SecDF-YajC and YidC.

It localises to the cell inner membrane. It is found in the cytoplasm. It carries out the reaction ATP + H2O + cellular proteinSide 1 = ADP + phosphate + cellular proteinSide 2.. Its function is as follows. Part of the Sec protein translocase complex. Interacts with the SecYEG preprotein conducting channel. Has a central role in coupling the hydrolysis of ATP to the transfer of proteins into and across the cell membrane, serving both as a receptor for the preprotein-SecB complex and as an ATP-driven molecular motor driving the stepwise translocation of polypeptide chains across the membrane. The sequence is that of Protein translocase subunit SecA 2 from Bordetella avium (strain 197N).